We begin with the raw amino-acid sequence, 359 residues long: 3-dehydroquinate synthase (359 aa).

Residues 71–76 (DGEAYK), 105–109 (GVVGD), 129–130 (TT), lysine 142, and lysine 151 contribute to the NAD(+) site. Zn(2+) contacts are provided by glutamate 184, histidine 247, and histidine 264.

It belongs to the sugar phosphate cyclases superfamily. Dehydroquinate synthase family. The cofactor is Co(2+). Zn(2+) serves as cofactor. It depends on NAD(+) as a cofactor.

The protein resides in the cytoplasm. The catalysed reaction is 7-phospho-2-dehydro-3-deoxy-D-arabino-heptonate = 3-dehydroquinate + phosphate. Its pathway is metabolic intermediate biosynthesis; chorismate biosynthesis; chorismate from D-erythrose 4-phosphate and phosphoenolpyruvate: step 2/7. Catalyzes the conversion of 3-deoxy-D-arabino-heptulosonate 7-phosphate (DAHP) to dehydroquinate (DHQ). In Burkholderia orbicola (strain MC0-3), this protein is 3-dehydroquinate synthase.